Reading from the N-terminus, the 360-residue chain is Phosphoserine aminotransferase (360 aa).

Residue Arg-41 participates in L-glutamate binding. Positions 101, 152, 172, and 195 each coordinate pyridoxal 5'-phosphate. N6-(pyridoxal phosphate)lysine is present on Lys-196. Residue 237-238 coordinates pyridoxal 5'-phosphate; it reads NT.

Belongs to the class-V pyridoxal-phosphate-dependent aminotransferase family. SerC subfamily. In terms of assembly, homodimer. It depends on pyridoxal 5'-phosphate as a cofactor.

It localises to the cytoplasm. The enzyme catalyses O-phospho-L-serine + 2-oxoglutarate = 3-phosphooxypyruvate + L-glutamate. The catalysed reaction is 4-(phosphooxy)-L-threonine + 2-oxoglutarate = (R)-3-hydroxy-2-oxo-4-phosphooxybutanoate + L-glutamate. It participates in amino-acid biosynthesis; L-serine biosynthesis; L-serine from 3-phospho-D-glycerate: step 2/3. The protein operates within cofactor biosynthesis; pyridoxine 5'-phosphate biosynthesis; pyridoxine 5'-phosphate from D-erythrose 4-phosphate: step 3/5. Its function is as follows. Catalyzes the reversible conversion of 3-phosphohydroxypyruvate to phosphoserine and of 3-hydroxy-2-oxo-4-phosphonooxybutanoate to phosphohydroxythreonine. This Burkholderia ambifaria (strain ATCC BAA-244 / DSM 16087 / CCUG 44356 / LMG 19182 / AMMD) (Burkholderia cepacia (strain AMMD)) protein is Phosphoserine aminotransferase.